The following is a 404-amino-acid chain: Serine/threonine transporter SstT (404 aa).

The next 8 helical transmembrane spans lie at 17–37 (IGIGVVIGVMLGILAPDLTGF), 39–59 (ILGKLFVGGLKAIAPLLVFAL), 75–95 (MTLIIVLYLFGTFASALVAVL), 138–158 (ALATANYIGVLSWAIIFGLAL), 179–199 (IVVWIINLAPIGIMSLVFTTI), 212–232 (FLILVLVGTMVFVALVVNPLI), 287–307 (IPLGATINMGGAAITINVLTL), and 313–333 (FGIPIDFLTALLLSVVAAVSA).

The protein belongs to the dicarboxylate/amino acid:cation symporter (DAACS) (TC 2.A.23) family.

It localises to the cell membrane. It catalyses the reaction L-serine(in) + Na(+)(in) = L-serine(out) + Na(+)(out). It carries out the reaction L-threonine(in) + Na(+)(in) = L-threonine(out) + Na(+)(out). Functionally, involved in the import of serine and threonine into the cell, with the concomitant import of sodium (symport system). This chain is Serine/threonine transporter SstT, found in Streptococcus pyogenes serotype M2 (strain MGAS10270).